Here is a 214-residue protein sequence, read N- to C-terminus: N-(5'-phosphoribosyl)anthranilate isomerase (214 aa).

This sequence belongs to the TrpF family.

It carries out the reaction N-(5-phospho-beta-D-ribosyl)anthranilate = 1-(2-carboxyphenylamino)-1-deoxy-D-ribulose 5-phosphate. Its pathway is amino-acid biosynthesis; L-tryptophan biosynthesis; L-tryptophan from chorismate: step 3/5. The chain is N-(5'-phosphoribosyl)anthranilate isomerase from Halorubrum lacusprofundi (strain ATCC 49239 / DSM 5036 / JCM 8891 / ACAM 34).